The sequence spans 200 residues: Octanoyltransferase (200 aa).

The BPL/LPL catalytic domain occupies 27–200; the sequence is GAEDDQLWLV…WAELFSARWR (174 aa). Residues 66–73, 134–136, and 147–149 each bind substrate; these read RGGQITYH, SLG, and GIA. The active-site Acyl-thioester intermediate is the Cys-165.

Belongs to the LipB family.

Its subcellular location is the cytoplasm. It catalyses the reaction octanoyl-[ACP] + L-lysyl-[protein] = N(6)-octanoyl-L-lysyl-[protein] + holo-[ACP] + H(+). It participates in protein modification; protein lipoylation via endogenous pathway; protein N(6)-(lipoyl)lysine from octanoyl-[acyl-carrier-protein]: step 1/2. Its function is as follows. Catalyzes the transfer of endogenously produced octanoic acid from octanoyl-acyl-carrier-protein onto the lipoyl domains of lipoate-dependent enzymes. Lipoyl-ACP can also act as a substrate although octanoyl-ACP is likely to be the physiological substrate. The protein is Octanoyltransferase of Dichelobacter nodosus (strain VCS1703A).